Here is a 110-residue protein sequence, read N- to C-terminus: Protein P2 (110 aa).

Polar residues predominate over residues 72–82 (KLPTTSGSSSA). The tract at residues 72–110 (KLPTTSGSSSAGAIVPAGSNTQGQYKAPPKKGIKRKYPA) is disordered. Residues 99-110 (PPKKGIKRKYPA) show a composition bias toward basic residues.

This is Protein P2 from Oryza sativa (Rice).